A 251-amino-acid polypeptide reads, in one-letter code: Flap endonuclease Xni (251 aa).

Mg(2+) is bound at residue aspartate 104. In terms of domain architecture, 5'-3' exonuclease spans 160-249; it reads VLPRQLPDYW…IDGNLQQLRL (90 aa). 5 residues coordinate K(+): leucine 171, alanine 172, proline 180, valine 182, and isoleucine 185. Positions 184–189 are interaction with DNA; that stretch reads GIGPKS.

The protein belongs to the Xni family. Mg(2+) serves as cofactor. The cofactor is K(+).

In terms of biological role, has flap endonuclease activity. During DNA replication, flap endonucleases cleave the 5'-overhanging flap structure that is generated by displacement synthesis when DNA polymerase encounters the 5'-end of a downstream Okazaki fragment. The polypeptide is Flap endonuclease Xni (Salmonella dublin (strain CT_02021853)).